The following is a 649-amino-acid chain: Protein translocase subunit SecA 2 (649 aa).

Residues glutamine 105, 123–127 (GEGKT), and aspartate 535 each bind ATP.

It belongs to the SecA family. In terms of assembly, monomer and homodimer. Part of the essential Sec protein translocation apparatus which comprises SecA, SecYEG and auxiliary proteins SecDF-YajC and YidC.

The protein localises to the cell inner membrane. It localises to the cytoplasm. It catalyses the reaction ATP + H2O + cellular proteinSide 1 = ADP + phosphate + cellular proteinSide 2.. Functionally, part of the Sec protein translocase complex. Interacts with the SecYEG preprotein conducting channel. Has a central role in coupling the hydrolysis of ATP to the transfer of proteins into and across the cell membrane, serving both as a receptor for the preprotein-SecB complex and as an ATP-driven molecular motor driving the stepwise translocation of polypeptide chains across the membrane. The polypeptide is Protein translocase subunit SecA 2 (Magnetococcus marinus (strain ATCC BAA-1437 / JCM 17883 / MC-1)).